The following is a 501-amino-acid chain: Glycogenin-2 (501 aa).

UDP-binding residues include L42, T44, N45, Y48, and R110. Residues L42, T44, N45, Y48, R110, K119, D135, A136, D137, N166, S167, D193, D196, and Q197 each contribute to the UDP-alpha-D-glucose site. Positions 135, 136, and 137 each coordinate UDP. D135 contributes to the Mn(2+) binding site. A Mn(2+)-binding site is contributed by D137. O-linked (Glc...) tyrosine glycosylation occurs at Y228. Residues H245, G248, and K251 each coordinate UDP. H245 lines the Mn(2+) pocket. The UDP-alpha-D-glucose site is built by G248 and K251. Phosphoserine occurs at positions 368, 399, and 459.

In terms of assembly, homodimer, tightly complexed to glycogen synthase. Mn(2+) serves as cofactor. In terms of processing, self-glycosylated by the transfer of glucose residues from UDP-glucose to itself, forming an alpha-1,4-glycan of around 10 residues attached to Tyr-228. In terms of tissue distribution, detected in liver (at protein level). Expressed preferentially in liver, heart, and pancreas.

Its subcellular location is the cytoplasm. The protein resides in the nucleus. The catalysed reaction is L-tyrosyl-[glycogenin] + UDP-alpha-D-glucose = alpha-D-glucosyl-L-tyrosyl-[glycogenin] + UDP + H(+). It carries out the reaction [1,4-alpha-D-glucosyl](n)-L-tyrosyl-[glycogenin] + UDP-alpha-D-glucose = [1,4-alpha-D-glucosyl](n+1)-L-tyrosyl-[glycogenin] + UDP + H(+). Its pathway is glycan biosynthesis; glycogen biosynthesis. Functionally, glycogenin participates in the glycogen biosynthetic process along with glycogen synthase and glycogen branching enzyme. It catalyzes the formation of a short alpha (1,4)-glucosyl chain covalently attached via a glucose 1-O-tyrosyl linkage to internal tyrosine residues and these chains act as primers for the elongation reaction catalyzed by glycogen synthase. This Homo sapiens (Human) protein is Glycogenin-2 (GYG2).